Reading from the N-terminus, the 421-residue chain is Testin (421 aa).

The PET domain occupies 92–199 (MILTNPVAAK…GDVKLPREMN (108 aa)). The interval 133-164 (EKQPVAGSEGAQYRKKQLAKQLPAHDQDPSKC) is disordered. Basic and acidic residues predominate over residues 155 to 164 (PAHDQDPSKC). LIM zinc-binding domains are found at residues 234-297 (YSCY…CDSE), 299-359 (PRCA…NHAV), and 362-421 (QGCH…KMMS).

This sequence belongs to the prickle / espinas / testin family. As to quaternary structure, interacts via LIM domain 1 with ZYX. Interacts (via LIM domain 3) with ENAH and VASP. Interacts with ALKBH4, talin, actin, alpha-actinin, GRIP1 and PXN. Interacts (via LIM domain 2) with ACTL7A (via N-terminus). Heterodimer with ACTL7A; the heterodimer interacts with ENAH to form a heterotrimer.

It localises to the cytoplasm. It is found in the cell junction. Its subcellular location is the focal adhesion. In terms of biological role, scaffold protein that may play a role in cell adhesion, cell spreading and in the reorganization of the actin cytoskeleton. Plays a role in the regulation of cell proliferation. May act as a tumor suppressor. In Sus scrofa (Pig), this protein is Testin (TES).